Here is a 425-residue protein sequence, read N- to C-terminus: Glucose-1-phosphate adenylyltransferase (425 aa).

Residues Y110, G175, 190–191 (EK), and S208 contribute to the alpha-D-glucose 1-phosphate site.

The protein belongs to the bacterial/plant glucose-1-phosphate adenylyltransferase family. Homotetramer.

The enzyme catalyses alpha-D-glucose 1-phosphate + ATP + H(+) = ADP-alpha-D-glucose + diphosphate. The protein operates within glycan biosynthesis; glycogen biosynthesis. In terms of biological role, involved in the biosynthesis of ADP-glucose, a building block required for the elongation reactions to produce glycogen. Catalyzes the reaction between ATP and alpha-D-glucose 1-phosphate (G1P) to produce pyrophosphate and ADP-Glc. The protein is Glucose-1-phosphate adenylyltransferase of Nitrosospira multiformis (strain ATCC 25196 / NCIMB 11849 / C 71).